A 750-amino-acid chain; its full sequence is Photosystem I P700 chlorophyll a apoprotein A1 (750 aa).

8 helical membrane passes run 70 to 93 (VFSA…FHGA), 156 to 179 (LYCT…FHYH), 195 to 219 (LNHH…HVSL), 291 to 309 (IAHH…GHMY), 346 to 369 (WHAQ…HHMY), 385 to 411 (LSLF…IFMV), 433 to 455 (AIIS…LYIH), and 531 to 549 (FLVH…LILL). Positions 573 and 582 each coordinate [4Fe-4S] cluster. Helical transmembrane passes span 589 to 610 (HVFL…HFSW) and 664 to 686 (LSAY…MFLF). Position 675 (His-675) interacts with chlorophyll a'. Chlorophyll a contacts are provided by Met-683 and Tyr-691. Residue Trp-692 coordinates phylloquinone. The helical transmembrane segment at 724–744 (AVGVTHYLLGGIATTWAFFLA) threads the bilayer.

Belongs to the PsaA/PsaB family. In terms of assembly, the PsaA/B heterodimer binds the P700 chlorophyll special pair and subsequent electron acceptors. PSI consists of a core antenna complex that captures photons, and an electron transfer chain that converts photonic excitation into a charge separation. The eukaryotic PSI reaction center is composed of at least 11 subunits. P700 is a chlorophyll a/chlorophyll a' dimer, A0 is one or more chlorophyll a, A1 is one or both phylloquinones and FX is a shared 4Fe-4S iron-sulfur center. serves as cofactor.

It localises to the plastid. The protein localises to the chloroplast thylakoid membrane. The enzyme catalyses reduced [plastocyanin] + hnu + oxidized [2Fe-2S]-[ferredoxin] = oxidized [plastocyanin] + reduced [2Fe-2S]-[ferredoxin]. In terms of biological role, psaA and PsaB bind P700, the primary electron donor of photosystem I (PSI), as well as the electron acceptors A0, A1 and FX. PSI is a plastocyanin-ferredoxin oxidoreductase, converting photonic excitation into a charge separation, which transfers an electron from the donor P700 chlorophyll pair to the spectroscopically characterized acceptors A0, A1, FX, FA and FB in turn. Oxidized P700 is reduced on the lumenal side of the thylakoid membrane by plastocyanin. The sequence is that of Photosystem I P700 chlorophyll a apoprotein A1 from Arabis hirsuta (Hairy rock-cress).